Here is a 302-residue protein sequence, read N- to C-terminus: MQLRKPATAILALALSAGLAQADDAAPAAGSTLDKIAKNGVIVVGHRESSVPFSYYDNQQKVVGYSQDYSNAIVEAVKKKLNKPDLQVKLIPITSQNRIPLLQNGTFDFECGSTTNNVERQKQAAFSDTIFVVGTRLLTKKGGDIKDFANLKDKAVVVTSGTTSEVLLNKLNEEQKMNMRIISAKDHGDSFRTLESGRAVAFMMDDALLAGERAKAKKPDNWEIVGKPQSQEAYGCMLRKDDPQFKKLMDDTIAQVQTSGEAEKWFDKWFKNPIPPKNLNMNFELSDEMKALFKEPNDKALN.

An N-terminal signal peptide occupies residues 1–22 (MQLRKPATAILALALSAGLAQA).

It belongs to the bacterial solute-binding protein 3 family. In terms of assembly, the complex is composed of two ATP-binding proteins (GltL), two transmembrane proteins (GltJ and GltK) and a solute-binding protein (GltI).

The protein localises to the periplasm. In terms of biological role, part of the ABC transporter complex GltIJKL involved in glutamate and aspartate uptake. Binds to both glutamate and aspartate. The chain is Glutamate/aspartate import solute-binding protein (gltI) from Escherichia coli (strain K12).